The sequence spans 86 residues: Actinorhodin polyketide synthase acyl carrier protein (86 aa).

The region spanning 4–82 (LLTTDDLRRA…ELLDLINGAL (79 aa)) is the Carrier domain. O-(pantetheine 4'-phosphoryl)serine is present on serine 42.

In terms of processing, 4'-phosphopantetheine is transferred from CoA to a specific serine of the apo-ACP-like protein.

It participates in antibiotic biosynthesis; actinorhodin biosynthesis. Acyl carrier protein. In Streptomyces coelicolor (strain ATCC BAA-471 / A3(2) / M145), this protein is Actinorhodin polyketide synthase acyl carrier protein.